The sequence spans 156 residues: 6,7-dimethyl-8-ribityllumazine synthase (156 aa).

5-amino-6-(D-ribitylamino)uracil contacts are provided by residues phenylalanine 23, 57–59, and 81–83; these read AYE and AII. 86–87 contributes to the (2S)-2-hydroxy-3-oxobutyl phosphate binding site; sequence GT. The active-site Proton donor is histidine 89. Phenylalanine 114 is a binding site for 5-amino-6-(D-ribitylamino)uracil. (2S)-2-hydroxy-3-oxobutyl phosphate is bound at residue arginine 128.

It belongs to the DMRL synthase family.

It catalyses the reaction (2S)-2-hydroxy-3-oxobutyl phosphate + 5-amino-6-(D-ribitylamino)uracil = 6,7-dimethyl-8-(1-D-ribityl)lumazine + phosphate + 2 H2O + H(+). Its pathway is cofactor biosynthesis; riboflavin biosynthesis; riboflavin from 2-hydroxy-3-oxobutyl phosphate and 5-amino-6-(D-ribitylamino)uracil: step 1/2. Catalyzes the formation of 6,7-dimethyl-8-ribityllumazine by condensation of 5-amino-6-(D-ribitylamino)uracil with 3,4-dihydroxy-2-butanone 4-phosphate. This is the penultimate step in the biosynthesis of riboflavin. The chain is 6,7-dimethyl-8-ribityllumazine synthase from Helicobacter pylori (strain P12).